A 351-amino-acid polypeptide reads, in one-letter code: Amylovoran biosynthesis glycosyltransferase AmsD (351 aa).

This sequence belongs to the glycosyltransferase group 1 family. Glycosyltransferase 4 subfamily.

It participates in glycan metabolism; exopolysaccharide biosynthesis. In terms of biological role, involved in the biosynthesis of amylovoran which functions as a virulence factor. May be involved in the formation of galactose alpha-1,6 linkages in amylovoran. The sequence is that of Amylovoran biosynthesis glycosyltransferase AmsD (amsD) from Erwinia amylovora (Fire blight bacteria).